We begin with the raw amino-acid sequence, 393 residues long: Dual-specificity RNA methyltransferase RlmN (393 aa).

The active-site Proton acceptor is the Glu115. The region spanning 121 to 365 (EEDRGTLCIS…APIRKTRGDD (245 aa)) is the Radical SAM core domain. Cys128 and Cys370 are joined by a disulfide. 3 residues coordinate [4Fe-4S] cluster: Cys135, Cys139, and Cys142. Residues 194–195 (GE), Ser226, 248–250 (SFH), and Asn327 each bind S-adenosyl-L-methionine. Cys370 (S-methylcysteine intermediate) is an active-site residue.

Belongs to the radical SAM superfamily. RlmN family. [4Fe-4S] cluster is required as a cofactor.

It is found in the cytoplasm. The catalysed reaction is adenosine(2503) in 23S rRNA + 2 reduced [2Fe-2S]-[ferredoxin] + 2 S-adenosyl-L-methionine = 2-methyladenosine(2503) in 23S rRNA + 5'-deoxyadenosine + L-methionine + 2 oxidized [2Fe-2S]-[ferredoxin] + S-adenosyl-L-homocysteine. It carries out the reaction adenosine(37) in tRNA + 2 reduced [2Fe-2S]-[ferredoxin] + 2 S-adenosyl-L-methionine = 2-methyladenosine(37) in tRNA + 5'-deoxyadenosine + L-methionine + 2 oxidized [2Fe-2S]-[ferredoxin] + S-adenosyl-L-homocysteine. In terms of biological role, specifically methylates position 2 of adenine 2503 in 23S rRNA and position 2 of adenine 37 in tRNAs. m2A2503 modification seems to play a crucial role in the proofreading step occurring at the peptidyl transferase center and thus would serve to optimize ribosomal fidelity. The protein is Dual-specificity RNA methyltransferase RlmN of Ruegeria pomeroyi (strain ATCC 700808 / DSM 15171 / DSS-3) (Silicibacter pomeroyi).